Here is a 357-residue protein sequence, read N- to C-terminus: S-adenosylmethionine:tRNA ribosyltransferase-isomerase (357 aa).

Belongs to the QueA family. Monomer.

It localises to the cytoplasm. It catalyses the reaction 7-aminomethyl-7-carbaguanosine(34) in tRNA + S-adenosyl-L-methionine = epoxyqueuosine(34) in tRNA + adenine + L-methionine + 2 H(+). It participates in tRNA modification; tRNA-queuosine biosynthesis. Transfers and isomerizes the ribose moiety from AdoMet to the 7-aminomethyl group of 7-deazaguanine (preQ1-tRNA) to give epoxyqueuosine (oQ-tRNA). This Buchnera aphidicola subsp. Acyrthosiphon pisum (strain Tuc7) protein is S-adenosylmethionine:tRNA ribosyltransferase-isomerase.